We begin with the raw amino-acid sequence, 356 residues long: Cell division protein ZipA (356 aa).

Residues 1–6 (MEDLQL) are Periplasmic-facing. Residues 7-27 (VLFVLGAIAIVAVLVHGFWSI) form a helical membrane-spanning segment. Residues 28–356 (RRQQPKSLKD…DYLHRIRANA (329 aa)) are Cytoplasmic-facing. The interval 132–155 (PAQPDFSLQPPVAKEQHRGPKVSR) is disordered.

It belongs to the ZipA family. As to quaternary structure, interacts with FtsZ via their C-terminal domains.

It localises to the cell inner membrane. Essential cell division protein that stabilizes the FtsZ protofilaments by cross-linking them and that serves as a cytoplasmic membrane anchor for the Z ring. Also required for the recruitment to the septal ring of downstream cell division proteins. This chain is Cell division protein ZipA, found in Shewanella baltica (strain OS185).